The sequence spans 398 residues: Probable aminomethyltransferase (398 aa).

This sequence belongs to the GcvT family. In terms of assembly, the glycine cleavage system is composed of four proteins: P, T, L and H.

The enzyme catalyses N(6)-[(R)-S(8)-aminomethyldihydrolipoyl]-L-lysyl-[protein] + (6S)-5,6,7,8-tetrahydrofolate = N(6)-[(R)-dihydrolipoyl]-L-lysyl-[protein] + (6R)-5,10-methylene-5,6,7,8-tetrahydrofolate + NH4(+). Its function is as follows. The glycine cleavage system catalyzes the degradation of glycine. This is Probable aminomethyltransferase from Pyrococcus abyssi (strain GE5 / Orsay).